A 102-amino-acid polypeptide reads, in one-letter code: Glutaredoxin-C14 (102 aa).

The 101-residue stretch at 1 to 101 folds into the Glutaredoxin domain; sequence MDKVMRMSSE…PLIKPYQSFH (101 aa). An intrachain disulfide couples Cys-21 to Cys-24.

This sequence belongs to the glutaredoxin family. CC-type subfamily.

It localises to the cytoplasm. Its function is as follows. Has a glutathione-disulfide oxidoreductase activity in the presence of NADPH and glutathione reductase. Reduces low molecular weight disulfides and proteins. The protein is Glutaredoxin-C14 (GRXC14) of Arabidopsis thaliana (Mouse-ear cress).